We begin with the raw amino-acid sequence, 246 residues long: Uridylate kinase (246 aa).

ATP is bound at residue 13 to 16 (KLSG). Residue Gly-54 coordinates UMP. Gly-55 and Arg-59 together coordinate ATP. UMP contacts are provided by residues Asp-74 and 135–142 (AGMPYFST). Residues Asn-163, Tyr-169, and Asp-172 each contribute to the ATP site.

The protein belongs to the UMP kinase family. Homohexamer.

It is found in the cytoplasm. It catalyses the reaction UMP + ATP = UDP + ADP. Its pathway is pyrimidine metabolism; CTP biosynthesis via de novo pathway; UDP from UMP (UMPK route): step 1/1. Inhibited by UTP. Its function is as follows. Catalyzes the reversible phosphorylation of UMP to UDP. The sequence is that of Uridylate kinase from Bifidobacterium longum (strain NCC 2705).